The primary structure comprises 403 residues: Large ribosomal subunit protein uL3 (403 aa).

The segment at 1–37 (MSHRKFSAPRHGSLGFLPRKRSSRHRGKVKSFPKDDP) is disordered. Ser-13 carries the phosphoserine modification. Positions 18 to 31 (PRKRSSRHRGKVKS) are enriched in basic residues. Lys-39 is covalently cross-linked (Glycyl lysine isopeptide (Lys-Gly) (interchain with G-Cter in SUMO2)). At Lys-136 the chain carries N6-acetyllysine. Glycyl lysine isopeptide (Lys-Gly) (interchain with G-Cter in SUMO2) cross-links involve residues Lys-224 and Lys-226. His-245 carries the post-translational modification Tele-methylhistidine. Lys-286 and Lys-294 each carry N6-acetyllysine; alternate. A Glycyl lysine isopeptide (Lys-Gly) (interchain with G-Cter in SUMO2); alternate cross-link involves residue Lys-286. A Glycyl lysine isopeptide (Lys-Gly) (interchain with G-Cter in SUMO1); alternate cross-link involves residue Lys-294. The residue at position 304 (Ser-304) is a Phosphoserine. At Lys-366 the chain carries N6-acetyllysine; alternate. Residue Lys-366 forms a Glycyl lysine isopeptide (Lys-Gly) (interchain with G-Cter in SUMO2); alternate linkage. Residue Lys-373 is modified to N6-acetyllysine. Residues Lys-386, Lys-393, and Lys-399 each participate in a glycyl lysine isopeptide (Lys-Gly) (interchain with G-Cter in SUMO2) cross-link.

It belongs to the universal ribosomal protein uL3 family. As to quaternary structure, component of the large ribosomal subunit. Interacts with DHX33. In terms of processing, constitutively monomethylated at His-245 by METTL18. Methylation at His-245 regulates translation elongation by slowing ribosome traversal on tyrosine codons: slower elongation provides enough time for proper folding of synthesized proteins and prevents cellular aggregation of tyrosine-rich proteins. It is not required for incorporation of RPL3 into ribosomes.

Its subcellular location is the nucleus. The protein localises to the nucleolus. The protein resides in the cytoplasm. Functionally, component of the large ribosomal subunit. The ribosome is a large ribonucleoprotein complex responsible for the synthesis of proteins in the cell. The sequence is that of Large ribosomal subunit protein uL3 (RPL3) from Oryctolagus cuniculus (Rabbit).